A 493-amino-acid polypeptide reads, in one-letter code: Cysteine--tRNA ligase (493 aa).

Cysteine 41 contributes to the Zn(2+) binding site. The 'HIGH' region signature appears at 43 to 53; the sequence is PTVYNYPHIGN. 3 residues coordinate Zn(2+): cysteine 231, histidine 256, and glutamate 260. Residues 296-300 carry the 'KMSKS' region motif; sequence KMSKS. Lysine 299 contacts ATP.

The protein belongs to the class-I aminoacyl-tRNA synthetase family. As to quaternary structure, monomer. Zn(2+) serves as cofactor.

The protein resides in the cytoplasm. It catalyses the reaction tRNA(Cys) + L-cysteine + ATP = L-cysteinyl-tRNA(Cys) + AMP + diphosphate. In Novosphingobium aromaticivorans (strain ATCC 700278 / DSM 12444 / CCUG 56034 / CIP 105152 / NBRC 16084 / F199), this protein is Cysteine--tRNA ligase.